A 963-amino-acid polypeptide reads, in one-letter code: Longitudinals lacking protein, isoforms J/P/Q/S/Z (963 aa).

In terms of domain architecture, BTB spans 32-97 (VDCTLAAEGK…MYRGEVNISQ (66 aa)). Disordered stretches follow at residues 115–200 (LSDN…SSVL), 228–340 (SSGP…ASAS), 447–469 (DAQQ…RIRV), and 482–520 (GKSS…VSTT). Low complexity-rich tracts occupy residues 162–175 (SGDV…SSSP), 228–251 (SSGP…LTST), 263–293 (TSST…QTTS), and 329–340 (NSATGPNPASAS). Residues 491–512 (KLTQSKKSLISDAKTTNKTSTP) show a composition bias toward polar residues. Residues 849–871 (WVCRNCNRTYKWKNSLKCHLKNE) form a C2H2-type 1; degenerate zinc finger. Residues 878-901 (YFCSKMCGYATNVHSNLKRHLNTK) form a C2H2-type 2; degenerate zinc finger. Positions 900-963 (TKCRDREKDA…YTLVFQNDSA (64 aa)) are disordered. Residues 901–915 (KCRDREKDADDEKKP) are compositionally biased toward basic and acidic residues. Over residues 937–953 (SSSNNNNNGGGSSTSST) the composition is skewed to low complexity. The span at 954–963 (YTLVFQNDSA) shows a compositional bias: polar residues.

By stage 11, isoform Q, isoform P and isoform Z are expressed throughout the mesoderm. From stage 15, expression of isoform P expands to all tissues, whereas expression of isoform Z and isoform Q becomes restricted during later stages; starting from stage 14 to 16, isoform Z is expressed in muscle, and isoform Q and isoform Z are expressed in the CNS. For some isoforms, expression is also seen in specific types of cells in the embryo; isoform Z is expressed in the ventral furrow at stage 5, and isoform Q is expressed around the tracheal pits at stage 11. Isoform Z also shows transient enrichment in a dorsal cell layer in the CNS at stages 13 and 14.

The protein localises to the nucleus. Putative transcription factor required for axon growth and guidance in the central and peripheral nervous systems. Repels CNS axons away from the midline by promoting the expression of the midline repellent sli and its receptor robo. The protein is Longitudinals lacking protein, isoforms J/P/Q/S/Z of Drosophila melanogaster (Fruit fly).